A 367-amino-acid polypeptide reads, in one-letter code: Chorismate synthase (367 aa).

Residues R48 and R54 each contribute to the NADP(+) site. Residues 125-127 (RSS), 238-239 (NA), G278, 293-297 (KPTSS), and R319 contribute to the FMN site.

The protein belongs to the chorismate synthase family. In terms of assembly, homotetramer. FMNH2 serves as cofactor.

The catalysed reaction is 5-O-(1-carboxyvinyl)-3-phosphoshikimate = chorismate + phosphate. Its pathway is metabolic intermediate biosynthesis; chorismate biosynthesis; chorismate from D-erythrose 4-phosphate and phosphoenolpyruvate: step 7/7. In terms of biological role, catalyzes the anti-1,4-elimination of the C-3 phosphate and the C-6 proR hydrogen from 5-enolpyruvylshikimate-3-phosphate (EPSP) to yield chorismate, which is the branch point compound that serves as the starting substrate for the three terminal pathways of aromatic amino acid biosynthesis. This reaction introduces a second double bond into the aromatic ring system. This chain is Chorismate synthase, found in Stenotrophomonas maltophilia (strain R551-3).